We begin with the raw amino-acid sequence, 224 residues long: Peroxiredoxin-6 (224 aa).

A Thioredoxin domain is found at 5 to 169 (LLLGDEAPNF…ILRVVISLQL (165 aa)). The tract at residues 31–40 (DSWGILFSHP) is required and sufficient for targeting to lysosomes and lamellar bodies. A Phosphothreonine modification is found at threonine 44. Cysteine 47 functions as the Cysteine sulfenic acid (-SOH) intermediate; for peroxidase activity in the catalytic mechanism. Lysine 63 bears the N6-acetyllysine mark. The residue at position 89 (tyrosine 89) is a Phosphotyrosine. Catalysis depends on aspartate 140, which acts as the For phospholipase activity. Threonine 177 carries the phosphothreonine; by MAPK modification. Residue lysine 209 is modified to N6-acetyllysine; alternate. Lysine 209 is modified (N6-succinyllysine; alternate).

Belongs to the peroxiredoxin family. Prx6 subfamily. As to quaternary structure, homodimer. Interacts with GSTP1; mediates PRDX6 glutathionylation and regeneration. Interacts with APEX1. Interacts with STH. May interact with FAM168B. May interact with HTR2A. Post-translationally, irreversibly inactivated by overoxidation of Cys-47 to sulfinic acid (Cys-SO(2)H) and sulfonic acid (Cys-SO(3)H) forms upon oxidative stress. Phosphorylation at Thr-177 by MAP kinases increases the phospholipase activity of the enzyme. The phosphorylated form exhibits a greater lysophosphatidylcholine acyltransferase activity compared to the non-phosphorylated form.

It localises to the cytoplasm. It is found in the lysosome. It carries out the reaction a hydroperoxide + 2 glutathione = an alcohol + glutathione disulfide + H2O. It catalyses the reaction a 1,2-diacyl-sn-glycero-3-phosphocholine + H2O = a 1-acyl-sn-glycero-3-phosphocholine + a fatty acid + H(+). The enzyme catalyses a 1-acyl-sn-glycero-3-phosphocholine + an acyl-CoA = a 1,2-diacyl-sn-glycero-3-phosphocholine + CoA. The catalysed reaction is 1-hexadecanoyl-sn-glycero-3-phosphocholine + hexadecanoyl-CoA = 1,2-dihexadecanoyl-sn-glycero-3-phosphocholine + CoA. It carries out the reaction 1,2-dihexadecanoyl-sn-glycero-3-phosphocholine + H2O = 1-hexadecanoyl-sn-glycero-3-phosphocholine + hexadecanoate + H(+). Thiol-specific peroxidase that catalyzes the reduction of hydrogen peroxide and organic hydroperoxides to water and alcohols, respectively. Can reduce H(2)O(2) and short chain organic, fatty acid, and phospholipid hydroperoxides. Also has phospholipase activity, and can therefore either reduce the oxidized sn-2 fatty acyl group of phospholipids (peroxidase activity) or hydrolyze the sn-2 ester bond of phospholipids (phospholipase activity). These activities are dependent on binding to phospholipids at acidic pH and to oxidized phospholipds at cytosolic pH. Plays a role in cell protection against oxidative stress by detoxifying peroxides and in phospholipid homeostasis. Exhibits acyl-CoA-dependent lysophospholipid acyltransferase which mediates the conversion of lysophosphatidylcholine (1-acyl-sn-glycero-3-phosphocholine or LPC) into phosphatidylcholine (1,2-diacyl-sn-glycero-3-phosphocholine or PC). Shows a clear preference for LPC as the lysophospholipid and for palmitoyl CoA as the fatty acyl substrate. In Macaca fascicularis (Crab-eating macaque), this protein is Peroxiredoxin-6 (PRDX6).